Reading from the N-terminus, the 676-residue chain is Putative Xaa-Pro dipeptidyl-peptidase (676 aa).

Catalysis depends on charge relay system residues Ser-224, Asp-330, and His-361. The segment at 423–450 is disordered; it reads RPGTGTQAGVGTLGLRTGSGTETFTDDP.

This sequence belongs to the peptidase S15 family.

It carries out the reaction Hydrolyzes Xaa-Pro-|- bonds to release unblocked, N-terminal dipeptides from substrates including Ala-Pro-|-p-nitroanilide and (sequentially) Tyr-Pro-|-Phe-Pro-|-Gly-Pro-|-Ile.. The protein is Putative Xaa-Pro dipeptidyl-peptidase of Streptomyces avermitilis (strain ATCC 31267 / DSM 46492 / JCM 5070 / NBRC 14893 / NCIMB 12804 / NRRL 8165 / MA-4680).